Consider the following 171-residue polypeptide: N5-carboxyaminoimidazole ribonucleotide mutase (171 aa).

The substrate site is built by S10, D13, and R40.

This sequence belongs to the AIR carboxylase family. Class I subfamily.

It catalyses the reaction 5-carboxyamino-1-(5-phospho-D-ribosyl)imidazole + H(+) = 5-amino-1-(5-phospho-D-ribosyl)imidazole-4-carboxylate. It participates in purine metabolism; IMP biosynthesis via de novo pathway; 5-amino-1-(5-phospho-D-ribosyl)imidazole-4-carboxylate from 5-amino-1-(5-phospho-D-ribosyl)imidazole (N5-CAIR route): step 2/2. In terms of biological role, catalyzes the conversion of N5-carboxyaminoimidazole ribonucleotide (N5-CAIR) to 4-carboxy-5-aminoimidazole ribonucleotide (CAIR). The protein is N5-carboxyaminoimidazole ribonucleotide mutase of Thermotoga maritima (strain ATCC 43589 / DSM 3109 / JCM 10099 / NBRC 100826 / MSB8).